A 406-amino-acid chain; its full sequence is Argininosuccinate synthase (406 aa).

ATP-binding positions include 12–20 (AYSGGLDTS) and Ala-39. Positions 90 and 95 each coordinate L-citrulline. Position 120 (Gly-120) interacts with ATP. Positions 122, 126, and 127 each coordinate L-aspartate. Residue Asn-126 coordinates L-citrulline. L-citrulline contacts are provided by Arg-130, Ser-179, Ser-188, Glu-264, and Tyr-276.

The protein belongs to the argininosuccinate synthase family. Type 1 subfamily. In terms of assembly, homotetramer.

It is found in the cytoplasm. It catalyses the reaction L-citrulline + L-aspartate + ATP = 2-(N(omega)-L-arginino)succinate + AMP + diphosphate + H(+). It participates in amino-acid biosynthesis; L-arginine biosynthesis; L-arginine from L-ornithine and carbamoyl phosphate: step 2/3. The sequence is that of Argininosuccinate synthase from Geotalea uraniireducens (strain Rf4) (Geobacter uraniireducens).